Here is a 127-residue protein sequence, read N- to C-terminus: Ribonuclease P protein component (127 aa).

This sequence belongs to the RnpA family. In terms of assembly, consists of a catalytic RNA component (M1 or rnpB) and a protein subunit.

The enzyme catalyses Endonucleolytic cleavage of RNA, removing 5'-extranucleotides from tRNA precursor.. RNaseP catalyzes the removal of the 5'-leader sequence from pre-tRNA to produce the mature 5'-terminus. It can also cleave other RNA substrates such as 4.5S RNA. The protein component plays an auxiliary but essential role in vivo by binding to the 5'-leader sequence and broadening the substrate specificity of the ribozyme. This is Ribonuclease P protein component from Synechococcus sp. (strain RCC307).